The sequence spans 488 residues: Dipeptidase 3 (488 aa).

Residues 1–35 form the signal peptide; that stretch reads MQPTGPEGPRALSLRPLGHRLSLLGVLLIIPSLWV. Residues 41–60 are compositionally biased toward low complexity; it reads TPSLSSAPTSPGASSAMTTP. The disordered stretch occupies residues 41-74; sequence TPSLSSAPTSPGASSAMTTPGIPNDTTTSGVTSD. 2 disulfide bridges follow: Cys-143–Cys-222 and Cys-294–Cys-326. A glycan (N-linked (GlcNAc...) asparagine) is linked at Asn-331. Ser-459 is lipidated: GPI-anchor amidated serine. A propeptide spans 460 to 487 (removed in mature form); it reads KAPPCPLLGLVAAVTSPAFTLWLCCSGH.

It belongs to the metallo-dependent hydrolases superfamily. Peptidase M19 family. In terms of assembly, homodimer; disulfide-linked. Interacts with TEX101; co-localized on the cell surface of spermatocytes, spermatids, and testicular spermatozoa, co-localized only in cytoplasmic droplets of caput and corpus epididymal sperm.

The protein localises to the membrane. Lacks dipeptidase activity and is unable to hydrolyze cystinyl-bis-glycine, leukotriene D4 and the beta-lactam antibiotic imipenem. The absence of activity may be due to the inability of serine (instead of aspartate found in DPEP1/2) at position 356 to function as the acid/base catalyst and activate the nucleophilic water/hydroxide. The protein is Dipeptidase 3 (Dpep3) of Rattus norvegicus (Rat).